A 258-amino-acid chain; its full sequence is Phosphate import ATP-binding protein PstB (258 aa).

The ABC transporter domain occupies 13-253 (IEVENLNLWY…PKEQSTEDYI (241 aa)). Residue 45 to 52 (GPSGCGKS) coordinates ATP.

The protein belongs to the ABC transporter superfamily. Phosphate importer (TC 3.A.1.7) family. As to quaternary structure, the complex is composed of two ATP-binding proteins (PstB), two transmembrane proteins (PstC and PstA) and a solute-binding protein (PstS).

It is found in the cell membrane. The catalysed reaction is phosphate(out) + ATP + H2O = ADP + 2 phosphate(in) + H(+). Its function is as follows. Part of the ABC transporter complex PstSACB involved in phosphate import. Responsible for energy coupling to the transport system. This chain is Phosphate import ATP-binding protein PstB, found in Methanosarcina acetivorans (strain ATCC 35395 / DSM 2834 / JCM 12185 / C2A).